The primary structure comprises 180 residues: NAD(P)H-quinone oxidoreductase subunit I, chloroplastic (180 aa).

4Fe-4S ferredoxin-type domains follow at residues 55-84 and 95-124; these read GRIH…VDWR and LNYS…MTEE. [4Fe-4S] cluster contacts are provided by Cys-64, Cys-67, Cys-70, Cys-74, Cys-104, Cys-107, Cys-110, and Cys-114.

It belongs to the complex I 23 kDa subunit family. NDH is composed of at least 16 different subunits, 5 of which are encoded in the nucleus. [4Fe-4S] cluster is required as a cofactor.

Its subcellular location is the plastid. The protein resides in the chloroplast thylakoid membrane. It carries out the reaction a plastoquinone + NADH + (n+1) H(+)(in) = a plastoquinol + NAD(+) + n H(+)(out). The enzyme catalyses a plastoquinone + NADPH + (n+1) H(+)(in) = a plastoquinol + NADP(+) + n H(+)(out). Its function is as follows. NDH shuttles electrons from NAD(P)H:plastoquinone, via FMN and iron-sulfur (Fe-S) centers, to quinones in the photosynthetic chain and possibly in a chloroplast respiratory chain. The immediate electron acceptor for the enzyme in this species is believed to be plastoquinone. Couples the redox reaction to proton translocation, and thus conserves the redox energy in a proton gradient. This chain is NAD(P)H-quinone oxidoreductase subunit I, chloroplastic, found in Hordeum vulgare (Barley).